We begin with the raw amino-acid sequence, 177 residues long: Adenine phosphoribosyltransferase (177 aa).

This sequence belongs to the purine/pyrimidine phosphoribosyltransferase family. In terms of assembly, homodimer.

It is found in the cytoplasm. The catalysed reaction is AMP + diphosphate = 5-phospho-alpha-D-ribose 1-diphosphate + adenine. It participates in purine metabolism; AMP biosynthesis via salvage pathway; AMP from adenine: step 1/1. Catalyzes a salvage reaction resulting in the formation of AMP, that is energically less costly than de novo synthesis. In Chlorobaculum parvum (strain DSM 263 / NCIMB 8327) (Chlorobium vibrioforme subsp. thiosulfatophilum), this protein is Adenine phosphoribosyltransferase.